The following is a 418-amino-acid chain: Actin-related protein 3 (418 aa).

Position 2 is an N-acetylalanine (Ala-2). N6-acetyllysine occurs at positions 240, 244, 251, and 254.

This sequence belongs to the actin family. ARP3 subfamily. As to quaternary structure, component of the Arp2/3 complex composed of ACTR2/ARP2, ACTR3/ARP3, ARPC1B/p41-ARC, ARPC2/p34-ARC, ARPC3/p21-ARC, ARPC4/p20-ARC and ARPC5/p16-ARC. Interacts with WHDC1. Interacts weakly with MEFV. Interacts with AVIL. In terms of assembly, (Microbial infection) Interacts with bacterium B.thailandensis BimA.

The protein resides in the cytoplasm. Its subcellular location is the cytoskeleton. It localises to the cell projection. It is found in the nucleus. Its function is as follows. ATP-binding component of the Arp2/3 complex, a multiprotein complex that mediates actin polymerization upon stimulation by nucleation-promoting factor (NPF). The Arp2/3 complex mediates the formation of branched actin networks in the cytoplasm, providing the force for cell motility. Seems to contact the pointed end of the daughter actin filament. In podocytes, required for the formation of lamellipodia downstream of AVIL and PLCE1 regulation. In addition to its role in the cytoplasmic cytoskeleton, the Arp2/3 complex also promotes actin polymerization in the nucleus, thereby regulating gene transcription and repair of damaged DNA. The Arp2/3 complex promotes homologous recombination (HR) repair in response to DNA damage by promoting nuclear actin polymerization, leading to drive motility of double-strand breaks (DSBs). Plays a role in ciliogenesis. This chain is Actin-related protein 3 (Actr3), found in Mus musculus (Mouse).